A 123-amino-acid polypeptide reads, in one-letter code: Fluoride-specific ion channel FluC (123 aa).

Helical transmembrane passes span 1–21 (MLEI…RYLM), 32–52 (ILSL…GLVI), 64–84 (IGLL…SFSY), and 99–119 (FGYT…GIYL). Residues glycine 74 and threonine 77 each coordinate Na(+).

The protein belongs to the fluoride channel Fluc/FEX (TC 1.A.43) family.

It localises to the cell inner membrane. The catalysed reaction is fluoride(in) = fluoride(out). Na(+) is not transported, but it plays an essential structural role and its presence is essential for fluoride channel function. Fluoride-specific ion channel. Important for reducing fluoride concentration in the cell, thus reducing its toxicity. This chain is Fluoride-specific ion channel FluC, found in Gloeothece citriformis (strain PCC 7424) (Cyanothece sp. (strain PCC 7424)).